The sequence spans 561 residues: MKYIVMQDAFFVVLLLVLAVPLGIYMYKVMIGEKVFLSRVLEPVERFGYRLMGVSEVGMSAKRYAVSVLAFSAVGFVFVMAVLMLQGFLPLNPEGMKGLSFSLAFNTAASFVSNTNWQAYSGEAALSYFSQSIGLTVQNFVSAATGIAVLFAVIRGFIWKKQKTIGNFWQDLFRVTLYILLPLSLILALLLVSQGVVQSFADYSVVETLENGAKQLIPLGPAASQIAIKQLGTNGGGFFGANSAFPFENPSSFTNLIEMLAILLIPVALVVMFGRAVKDSKQGRAIMTAMMIVFVIGVVAITISEQFAGPHYQGVATSGSMEGKEVRFGVGGSSLFAASTTAASNGAVNAMHDSLTPLGGLVPMFFMQLGEVVFGGVGSGLYGMIGFIILTVFIAGLLVGRTPEYLGKKIEPYDMKMVCLLILVPPLLTLFGTAVAVMMPSVQASVSASGAHGFSEVLYAFTSMGNNNGSAFAGFAADTTFTNMVGAVMMLLARFIPLVAALYLAQNMAGKSSVAASSGTLSTKNGMFIGLLIGVVVLVGALSFLPALALGPIADFFTTFK.

10 helical membrane-spanning segments follow: residues 4–24 (IVMQDAFFVVLLLVLAVPLGI), 65–85 (AVSVLAFSAVGFVFVMAVLML), 133–153 (IGLTVQNFVSAATGIAVLFAV), 177–197 (LYILLPLSLILALLLVSQGVV), 253–273 (FTNLIEMLAILLIPVALVVMF), 285–305 (AIMTAMMIVFVIGVVAITISE), 380–400 (GLYGMIGFIILTVFIAGLLVG), 417–437 (MVCLLILVPPLLTLFGTAVAV), 484–504 (MVGAVMMLLARFIPLVAALYL), and 528–548 (FIGLLIGVVVLVGALSFLPAL).

This sequence belongs to the KdpA family. In terms of assembly, the system is composed of three essential subunits: KdpA, KdpB and KdpC.

It is found in the cell membrane. Part of the high-affinity ATP-driven potassium transport (or Kdp) system, which catalyzes the hydrolysis of ATP coupled with the electrogenic transport of potassium into the cytoplasm. This subunit binds the extracellular potassium ions and delivers the ions to the membrane domain of KdpB through an intramembrane tunnel. The protein is Potassium-transporting ATPase potassium-binding subunit of Listeria monocytogenes serotype 4b (strain CLIP80459).